The chain runs to 205 residues: Putative endonuclease segE (205 aa).

The GIY-YIG domain occupies 1–84; the sequence is MYHFVYETTN…LIKSKNYYNM (84 aa).

This sequence to endonucleases of group I introns of fungi and phage. The cofactor is Mg(2+).

Its function is as follows. Probably involved in the movement of the endonuclease-encoding DNA. The chain is Putative endonuclease segE (segE) from Escherichia coli (Bacteriophage T4).